Consider the following 654-residue polypeptide: Tetracycline resistance protein TetQ (654 aa).

The region spanning 1–244 is the tr-type G domain; the sequence is MNIINLGILA…AISSFILPPE (244 aa). GTP contacts are provided by residues 10 to 17, 74 to 78, and 128 to 131; these read AHIDAGKT, DTPGH, and NKID.

It belongs to the TRAFAC class translation factor GTPase superfamily. Classic translation factor GTPase family. TetM/TetO subfamily.

Abolishes the inhibitory effect of tetracyclin on protein synthesis by a non-covalent modification of the ribosomes. The protein is Tetracycline resistance protein TetQ (tetQ) of Prevotella intermedia.